A 297-amino-acid polypeptide reads, in one-letter code: N-acetylneuraminate lyase (297 aa).

Residues S47 and T48 each contribute to the aceneuramate site. Y137 (proton donor) is an active-site residue. The active-site Schiff-base intermediate with substrate is the K165. The aceneuramate site is built by T167, G189, D191, E192, and S208.

This sequence belongs to the DapA family. NanA subfamily. Homotetramer.

It localises to the cytoplasm. It catalyses the reaction aceneuramate = aldehydo-N-acetyl-D-mannosamine + pyruvate. The protein operates within amino-sugar metabolism; N-acetylneuraminate degradation; D-fructose 6-phosphate from N-acetylneuraminate: step 1/5. Functionally, catalyzes the reversible aldol cleavage of N-acetylneuraminic acid (sialic acid; Neu5Ac) to form pyruvate and N-acetylmannosamine (ManNAc) via a Schiff base intermediate. The chain is N-acetylneuraminate lyase from Escherichia fergusonii (strain ATCC 35469 / DSM 13698 / CCUG 18766 / IAM 14443 / JCM 21226 / LMG 7866 / NBRC 102419 / NCTC 12128 / CDC 0568-73).